A 212-amino-acid polypeptide reads, in one-letter code: Adenylate kinase (212 aa).

10–15 (GAGKGT) contacts ATP. The tract at residues 30–59 (STGDMFRAAMANQTEMGVLAKSYIDKGELV) is NMP. AMP contacts are provided by residues T31, R36, 57–59 (ELV), 86–89 (GYPR), and Q93. Positions 127–159 (GRIIHRQTGETFHKVFNPPANYNEEDYYQREDD) are LID. ATP contacts are provided by residues R128 and 137–138 (TF). AMP contacts are provided by R156 and R167. Q195 lines the ATP pocket.

Belongs to the adenylate kinase family. In terms of assembly, monomer.

It is found in the cytoplasm. It catalyses the reaction AMP + ATP = 2 ADP. It participates in purine metabolism; AMP biosynthesis via salvage pathway; AMP from ADP: step 1/1. Catalyzes the reversible transfer of the terminal phosphate group between ATP and AMP. Plays an important role in cellular energy homeostasis and in adenine nucleotide metabolism. The protein is Adenylate kinase of Streptococcus gordonii (strain Challis / ATCC 35105 / BCRC 15272 / CH1 / DL1 / V288).